Here is a 274-residue protein sequence, read N- to C-terminus: Syntaxin-12 (274 aa).

Positions 1-20 (MSYGPLDMYRNPGPSGPQPR) are disordered. Position 2 is an N-acetylserine (Ser2). At 2–250 (SYGPLDMYRN…AYYQKKSRKK (249 aa)) the chain is on the cytoplasmic side. A coiled-coil region spans residues 34–80 (QRISQATAQIKNLMSQLGTKQDSSKLQENLQQFQHSTNQLAKETNEL). Residues 128-150 (EKESIARARAGSRLSAEDRQREE) form a disordered region. 4 positions are modified to phosphoserine: Ser139, Ser142, Ser218, and Ser225. The region spanning 178–240 (LELIKERETA…ERASDQLQRA (63 aa)) is the t-SNARE coiled-coil homology domain. A helical; Anchor for type IV membrane protein membrane pass occupies residues 251-271 (MCILVLVLSVIVTVLVVVIWV). Residues 272–274 (ASK) are Vesicular-facing.

Belongs to the syntaxin family. In terms of assembly, associates with the BLOC-1 complex. Interacts with BLOC1S6. Interacts with NAPA and SNAP23. Identified in a complex containing STX6, STX12, VAMP4 and VTI1A. Interacts with GRIPAP1. Forms a complex with GRIP1, GRIA2 and NSG1; controls the intracellular fate of AMPAR and the endosomal sorting of the GRIA2 subunit toward recycling and membrane targeting. Interacts with NSG1. Interacts with TPC1. Interacts (via N-terminus) with VPS13B. In terms of tissue distribution, ubiquitous. Highly expressed in brain.

Its subcellular location is the endosome membrane. It localises to the golgi apparatus membrane. The protein localises to the endomembrane system. The protein resides in the early endosome membrane. It is found in the recycling endosome membrane. In terms of biological role, SNARE promoting fusion of transport vesicles with target membranes. Together with SNARE STX6, promotes movement of vesicles from endosomes to the cell membrane, and may therefore function in the endocytic recycling pathway. Through complex formation with GRIP1, GRIA2 and NSG1 controls the intracellular fate of AMPAR and the endosomal sorting of the GRIA2 subunit toward recycling and membrane targeting. The sequence is that of Syntaxin-12 (Stx12) from Rattus norvegicus (Rat).